The chain runs to 305 residues: MELIFLGTSAGVPTRTRNVTAILLNLQHPTQSGLWLFDCGEGTQHQLLHTAFNPGKLDKIFISHLHGDHLFGLPGLLCSRSMSGIIQPLTIYGPQGIREFVETALRISGSWTDYPLEIVEIGAGEILDDGLRKVTAYPMEHPLECYGYRIEEHDKPGALNAQALKAAGVPPSPLFQELKAGKTIMLEDGRQINGADYLAAPVPGKALAIFGDTGPCDAALDLAKGVDVMVHEATLDITMEAKANSRGHSSTRQAATLAREAGVGKLIITHVSSRYDDKGCQHLLRECRSIFPATELANDFTVFNV.

Residues H64, H66, D68, H69, H141, D212, and H270 each coordinate Zn(2+). Catalysis depends on D68, which acts as the Proton acceptor.

Belongs to the RNase Z family. RNase BN subfamily. Homodimer. Zn(2+) is required as a cofactor.

Its function is as follows. Zinc phosphodiesterase, which has both exoribonuclease and endoribonuclease activities. This is Ribonuclease BN from Escherichia coli O157:H7.